A 233-amino-acid polypeptide reads, in one-letter code: uncharacterized protein (233 aa).

The chain crosses the membrane as a helical span at residues 21–41 (LNILIAIVSILIVVVAANLFI). The disordered stretch occupies residues 44-163 (PSSKDVSKDS…GEHAATYDSS (120 aa)). Basic and acidic residues-rich tracts occupy residues 48-57 (DVSKDSETAQ), 66-108 (KTEK…KKDD), and 135-144 (DVEKTYENPD).

The protein localises to the cell membrane. This is an uncharacterized protein from Bacillus subtilis (strain 168).